The sequence spans 37 residues: Large ribosomal subunit protein bL36 (37 aa).

It belongs to the bacterial ribosomal protein bL36 family.

The protein is Large ribosomal subunit protein bL36 of Sulfurovum sp. (strain NBC37-1).